Here is a 252-residue protein sequence, read N- to C-terminus: 5'-nucleotidase SurE (252 aa).

Positions 8, 9, 40, and 92 each coordinate a divalent metal cation.

This sequence belongs to the SurE nucleotidase family. Requires a divalent metal cation as cofactor.

It localises to the cytoplasm. It carries out the reaction a ribonucleoside 5'-phosphate + H2O = a ribonucleoside + phosphate. Nucleotidase that shows phosphatase activity on nucleoside 5'-monophosphates. The polypeptide is 5'-nucleotidase SurE (Chelativorans sp. (strain BNC1)).